The sequence spans 576 residues: Arginine--tRNA ligase (576 aa).

The short motif at 122 to 132 (PNVAKEMHVGH) is the 'HIGH' region element.

It belongs to the class-I aminoacyl-tRNA synthetase family. Monomer.

It is found in the cytoplasm. The enzyme catalyses tRNA(Arg) + L-arginine + ATP = L-arginyl-tRNA(Arg) + AMP + diphosphate. This is Arginine--tRNA ligase from Pectobacterium carotovorum subsp. carotovorum (strain PC1).